The chain runs to 542 residues: Leucine-rich repeat-containing protein 56 (542 aa).

LRR repeat units lie at residues 94–115 (NLDQLKLNGSHLGSLRDLGTSL), 117–138 (HLQVLWLARCGLADLDGIASLP), 139–160 (ALKELYASYNNISDLSPLCLLE), 161–182 (QLEVLDLEGNSVEDLGQVRYLQ), and 186–206 (RLAMLTLEGNLVCLQPAPGPT). The LRRCT domain occupies 207–250 (NKVPRGYNYRAEVRKLIPQLQVLDEVPAAHTGPPAPPRLSQDWL). Disordered regions lie at residues 308–377 (LLSE…ADSS), 396–475 (LPYR…LQSR), and 507–542 (RLSPRAQGCPGPKPAPDAAARPPRAAELSHPSPVPT). Over residues 416 to 426 (RVPEEQVHQAE) the composition is skewed to basic and acidic residues. Low complexity predominate over residues 522–532 (PDAAARPPRAA).

The protein belongs to the LRRC56 family. In terms of assembly, interacts with IFT88.

It is found in the cell projection. The protein resides in the cilium. Required for the assembly of dynein arms. The polypeptide is Leucine-rich repeat-containing protein 56 (LRRC56) (Homo sapiens (Human)).